Here is a 488-residue protein sequence, read N- to C-terminus: MVIFYFCGKTFMPARNRWMLLLPLLASAAYAEETPREPDLRSRPEFRLHEAEVKPIDREKVPGQVREKGKVLQIDGETLLKNPELLSRAMYSAVVSNNIAGIRVILPIYLQQAQQDKMLALYAQGILAQADGRVKEAISHYRELIAAQPDAPAVRMRLAAALFENRQNEAAADQFDRLKAENLPPQLMEQVELYRKALRERDAWKVNGGFSVTREHNINQAPKRQQYGKWTFPKQVDGTAVNYRLGAEKKWSLKNGWYTTAGGDVSGRVYPGNKKFNDMTAGVSGGIGFADRRKDAGLAVFHERRTYGNDAYSYTNGARLYFNRWQTPKWQTLSSAEWGRLKNTRRARSDNTHLQISNSLVFYRNARQYWMGGLDFYRERNPADRGDNFNRYGLRFAWGQEWGGSGLSSLLRLGAAKRHYEKPGFFSGFKGERRRDKELNTSLSLWHRALHFKGITPRLTLSHRETRSNDVFNEYEKNRAFVEFNKTF.

A signal peptide spans 1–31 (MVIFYFCGKTFMPARNRWMLLLPLLASAAYA). The segment at 32–202 (EETPREPDLR…LYRKALRERD (171 aa)) is N-terminal domain. TPR repeat units follow at residues 118–151 (MLAL…QPDA) and 171–204 (AADQ…RDAW). Residues 203 to 488 (AWKVNGGFSV…RAFVEFNKTF (286 aa)) form a C-terminal probable beta barrel, partially restores export of lipoproteins region. Transmembrane regions (beta stranded) follow at residues 204 to 214 (WKVNGGFSVTR), 241 to 252 (VNYRLGAEKKWS), 257 to 267 (WYTTAGGDVSG), 280 to 291 (TAGVSGGIGFAD), 294 to 304 (KDAGLAVFHER), 316 to 325 (NGARLYFNRW), 330 to 340 (WQTLSSAEWGR), 354 to 364 (LQISNSLVFYR), 368 to 377 (QYWMGGLDFY), 393 to 402 (GLRFAWGQEW), 407 to 417 (LSSLLRLGAAK), 439 to 448 (LNTSLSLWHR), 455 to 464 (ITPRLTLSHR), and 478 to 488 (NRAFVEFNKTF).

This sequence belongs to the Slam family. As to quaternary structure, interacts with the C-terminal domain of surface lipoprotein TbpB.

It is found in the cell outer membrane. Functionally, required for correct export to the cell surface of some cell outer membrane lipoproteins both in Neisseria and heterologously in E.coli. In Neisseria meningitidis serogroup B (strain ATCC BAA-335 / MC58), this protein is Surface lipoprotein assembly modifier 1.